We begin with the raw amino-acid sequence, 207 residues long: Large ribosomal subunit protein bL25 (207 aa).

Residues 171–207 are disordered; sequence EEETVVTVSAPRAEEEPTTTEAPEPEAVHGKDEEPVE. The segment covering 196-207 has biased composition (basic and acidic residues); it reads EAVHGKDEEPVE.

The protein belongs to the bacterial ribosomal protein bL25 family. CTC subfamily. As to quaternary structure, part of the 50S ribosomal subunit; part of the 5S rRNA/L5/L18/L25 subcomplex. Contacts the 5S rRNA. Binds to the 5S rRNA independently of L5 and L18.

Functionally, this is one of the proteins that binds to the 5S RNA in the ribosome where it forms part of the central protuberance. This is Large ribosomal subunit protein bL25 from Listeria monocytogenes serotype 4b (strain F2365).